A 750-amino-acid chain; its full sequence is Photosystem I P700 chlorophyll a apoprotein A1 (750 aa).

8 consecutive transmembrane segments (helical) span residues 70 to 93, 156 to 179, 195 to 219, 291 to 309, 346 to 369, 385 to 411, 433 to 455, and 531 to 549; these read VFSA…FHGA, LYCT…FHYH, LNHH…HVSL, IAHH…GHMY, WHAQ…HHMY, LSLF…IFMV, AIIS…LYIH, and FLVH…LILL. Residues cysteine 573 and cysteine 582 each coordinate [4Fe-4S] cluster. 2 helical membrane-spanning segments follow: residues 589–610 and 664–686; these read HVFL…HFSW and LSAY…MFLF. Histidine 675 is a chlorophyll a' binding site. Positions 683 and 691 each coordinate chlorophyll a. Tryptophan 692 lines the phylloquinone pocket. A helical membrane pass occupies residues 724–744; that stretch reads TVGVTHYLLGGIATTWAFFLA.

The protein belongs to the PsaA/PsaB family. The PsaA/B heterodimer binds the P700 chlorophyll special pair and subsequent electron acceptors. PSI consists of a core antenna complex that captures photons, and an electron transfer chain that converts photonic excitation into a charge separation. The eukaryotic PSI reaction center is composed of at least 11 subunits. It depends on P700 is a chlorophyll a/chlorophyll a' dimer, A0 is one or more chlorophyll a, A1 is one or both phylloquinones and FX is a shared 4Fe-4S iron-sulfur center. as a cofactor.

The protein resides in the plastid. Its subcellular location is the chloroplast thylakoid membrane. The enzyme catalyses reduced [plastocyanin] + hnu + oxidized [2Fe-2S]-[ferredoxin] = oxidized [plastocyanin] + reduced [2Fe-2S]-[ferredoxin]. PsaA and PsaB bind P700, the primary electron donor of photosystem I (PSI), as well as the electron acceptors A0, A1 and FX. PSI is a plastocyanin-ferredoxin oxidoreductase, converting photonic excitation into a charge separation, which transfers an electron from the donor P700 chlorophyll pair to the spectroscopically characterized acceptors A0, A1, FX, FA and FB in turn. Oxidized P700 is reduced on the lumenal side of the thylakoid membrane by plastocyanin. The sequence is that of Photosystem I P700 chlorophyll a apoprotein A1 from Oenothera elata subsp. hookeri (Hooker's evening primrose).